The chain runs to 340 residues: MDRDPSEEDSMADLSFEAESPVLPPDELLEGLPSYDWLLQGRERQVFFPPLEALGRSQEPACWSSVLEHSRVPVVTEEVAREALLSFVNSHCCYSSAAAGNLIIQELRQQTLCRYRLETFSESRVSEWTFQPVTNHSVDGPQRGTSPRLWDMKVQVPPMFQEDTRKLQVPHSSLVKECHKCHGRGRYKCSGCHGAGMVRCSSCSGTKRKAKQPRRCHLCSGSGRRRCSTCSGRGNKTCATCKGERKLEHFVQLVIMWKNSLFEFMSPHHLHCPKELLAKARGENLFRDENATVYPIVDFPLQDISLASQRGIEEHSTMLASRARILQQMFFYSGGPFHHS.

Over residues 1–11 the composition is skewed to acidic residues; sequence MDRDPSEEDSM. Residues 1 to 20 form a disordered region; that stretch reads MDRDPSEEDSMADLSFEAES.

Widely expressed, with highest levels in the liver, intestine, tongue and underjaw.

The protein localises to the cytoplasm. It is found in the nucleus. Its function is as follows. Plays a role in odontogenesis. In Mus musculus (Mouse), this protein is Protein SSUH2 homolog.